A 336-amino-acid chain; its full sequence is Biotin synthase (336 aa).

The Radical SAM core domain occupies 55–282 (NRVQLSKLLN…QSHVRLTAGR (228 aa)). Residues C70, C74, and C77 each contribute to the [4Fe-4S] cluster site. The [2Fe-2S] cluster site is built by C114, C145, C205, and R277.

Belongs to the radical SAM superfamily. Biotin synthase family. Homodimer. [4Fe-4S] cluster serves as cofactor. The cofactor is [2Fe-2S] cluster.

The catalysed reaction is (4R,5S)-dethiobiotin + (sulfur carrier)-SH + 2 reduced [2Fe-2S]-[ferredoxin] + 2 S-adenosyl-L-methionine = (sulfur carrier)-H + biotin + 2 5'-deoxyadenosine + 2 L-methionine + 2 oxidized [2Fe-2S]-[ferredoxin]. It participates in cofactor biosynthesis; biotin biosynthesis; biotin from 7,8-diaminononanoate: step 2/2. Its function is as follows. Catalyzes the conversion of dethiobiotin (DTB) to biotin by the insertion of a sulfur atom into dethiobiotin via a radical-based mechanism. The sequence is that of Biotin synthase from Brucella anthropi (strain ATCC 49188 / DSM 6882 / CCUG 24695 / JCM 21032 / LMG 3331 / NBRC 15819 / NCTC 12168 / Alc 37) (Ochrobactrum anthropi).